Reading from the N-terminus, the 517-residue chain is ATP synthase subunit alpha 1 (517 aa).

Glycine 174–threonine 181 is an ATP binding site.

Belongs to the ATPase alpha/beta chains family. In terms of assembly, F-type ATPases have 2 components, CF(1) - the catalytic core - and CF(0) - the membrane proton channel. CF(1) has five subunits: alpha(3), beta(3), gamma(1), delta(1), epsilon(1). CF(0) has three main subunits: a(1), b(2) and c(9-12). The alpha and beta chains form an alternating ring which encloses part of the gamma chain. CF(1) is attached to CF(0) by a central stalk formed by the gamma and epsilon chains, while a peripheral stalk is formed by the delta and b chains.

The protein localises to the cell inner membrane. It catalyses the reaction ATP + H2O + 4 H(+)(in) = ADP + phosphate + 5 H(+)(out). Produces ATP from ADP in the presence of a proton gradient across the membrane. The alpha chain is a regulatory subunit. This Polaromonas naphthalenivorans (strain CJ2) protein is ATP synthase subunit alpha 1.